The sequence spans 669 residues: UvrABC system protein B (669 aa).

The region spanning 26-414 (TNFHAGIAKQ…AGEVIELLVR (389 aa)) is the Helicase ATP-binding domain. 39–46 (GVTGSGKT) is an ATP binding site. The Beta-hairpin motif lies at 92–115 (YYDYYQPEAYVPASDTFIEKDSSI). Residues 435-597 (LISQINVCIK…SVVRPISDIL (163 aa)) form the Helicase C-terminal domain. The UVR domain maps to 631-666 (AAQMKVLEQQMYQHARDLEFEDAARIRDQIQRLREA).

Belongs to the UvrB family. As to quaternary structure, forms a heterotetramer with UvrA during the search for lesions. Interacts with UvrC in an incision complex.

The protein localises to the cytoplasm. Its function is as follows. The UvrABC repair system catalyzes the recognition and processing of DNA lesions. A damage recognition complex composed of 2 UvrA and 2 UvrB subunits scans DNA for abnormalities. Upon binding of the UvrA(2)B(2) complex to a putative damaged site, the DNA wraps around one UvrB monomer. DNA wrap is dependent on ATP binding by UvrB and probably causes local melting of the DNA helix, facilitating insertion of UvrB beta-hairpin between the DNA strands. Then UvrB probes one DNA strand for the presence of a lesion. If a lesion is found the UvrA subunits dissociate and the UvrB-DNA preincision complex is formed. This complex is subsequently bound by UvrC and the second UvrB is released. If no lesion is found, the DNA wraps around the other UvrB subunit that will check the other stand for damage. The polypeptide is UvrABC system protein B (Xylella fastidiosa (strain 9a5c)).